We begin with the raw amino-acid sequence, 486 residues long: MQWEVVIGLETHTQLTTKTKIFSGSPTRFGAAPNTQTSPVDLALPGALPVMNRSAVERAIQFGLAIGATIAPYSVFARKNYFYPDLPKGYQISQMDLPIVQGGRVSFAMEVDGKTEIRSVQLTRAHLEEDAGKSLHEDYHGMTGIDLNRAGTPLLEIVTEPDMRSAAEAVAYAKALHTLVTWIGICDGNMQEGSFRCDANVSVRPVGQKEYGTRCEIKNLNSFRFMEDAINYEVRRQIELIEDGGRVVQATRLYDPDKKETREMRSKENAHDYRYFPDPDLPPLVVSAEWITRVQAEMPELPGAMRERFTREYGLSDYDAAVLTQSKAMANYFELICSIAGHEQAKPAANLLMGDVASAVNRDGIELDAAPVSAAQLAVLLHRIADGTISNKIAKEVFGAMWEAKSDSPTIADELIESKGLKQISDSGALEKIVDDVLAANTKSVEEFRAGKEQAINALMGQAMKASKGKANPAQLTELLKKKLSA.

The protein belongs to the GatB/GatE family. GatB subfamily. As to quaternary structure, heterotrimer of A, B and C subunits.

It carries out the reaction L-glutamyl-tRNA(Gln) + L-glutamine + ATP + H2O = L-glutaminyl-tRNA(Gln) + L-glutamate + ADP + phosphate + H(+). The enzyme catalyses L-aspartyl-tRNA(Asn) + L-glutamine + ATP + H2O = L-asparaginyl-tRNA(Asn) + L-glutamate + ADP + phosphate + 2 H(+). In terms of biological role, allows the formation of correctly charged Asn-tRNA(Asn) or Gln-tRNA(Gln) through the transamidation of misacylated Asp-tRNA(Asn) or Glu-tRNA(Gln) in organisms which lack either or both of asparaginyl-tRNA or glutaminyl-tRNA synthetases. The reaction takes place in the presence of glutamine and ATP through an activated phospho-Asp-tRNA(Asn) or phospho-Glu-tRNA(Gln). This chain is Aspartyl/glutamyl-tRNA(Asn/Gln) amidotransferase subunit B, found in Herminiimonas arsenicoxydans.